Consider the following 183-residue polypeptide: Capsid protein (183 aa).

A disordered region spans residues N136–C183. Residues V149–S176 are compositionally biased toward basic residues. Residues S155, S162, and S170 each carry the phosphoserine; by host modification. The stretch at S155–P161 is one 1; half-length repeat. The segment at S155 to Q177 is 3 X 8 AA repeats of S-P-R-R-R-[PR]-S-Q. The short motif at R158–R175 is the Bipartite nuclear localization signal element. 2 repeat units span residues S162–Q169 and S170–Q177. Positions Q177–C183 are RNA binding.

This sequence belongs to the orthohepadnavirus core antigen family. In terms of assembly, homodimerizes, then multimerizes. Interacts with cytosol exposed regions of viral L glycoprotein present in the reticulum-to-Golgi compartment. Interacts with human FLNB. Phosphorylated form interacts with host importin alpha; this interaction depends on the exposure of the NLS, which itself depends upon genome maturation and/or phosphorylation of the capsid protein. Interacts with host NUP153. Phosphorylated by host SRPK1, SRPK2, and maybe protein kinase C or GAPDH. Phosphorylation is critical for pregenomic RNA packaging. Protein kinase C phosphorylation is stimulated by HBx protein and may play a role in transport of the viral genome to the nucleus at the late step during the viral replication cycle.

The protein resides in the virion. It is found in the host cytoplasm. In terms of biological role, self assembles to form an icosahedral capsid. Most capsids appear to be large particles with an icosahedral symmetry of T=4 and consist of 240 copies of capsid protein, though a fraction forms smaller T=3 particles consisting of 180 capsid proteins. Entering capsids are transported along microtubules to the nucleus. Phosphorylation of the capsid is thought to induce exposure of nuclear localization signal in the C-terminal portion of the capsid protein that allows binding to the nuclear pore complex via the importin (karyopherin-) alpha and beta. Capsids are imported in intact form through the nuclear pore into the nuclear basket, where it probably binds NUP153. Only capsids that contain the mature viral genome can release the viral DNA and capsid protein into the nucleoplasm. Immature capsids get stuck in the basket. Capsids encapsulate the pre-genomic RNA and the P protein. Pre-genomic RNA is reverse-transcribed into DNA while the capsid is still in the cytoplasm. The capsid can then either be directed to the nucleus, providing more genomes for transcription, or bud through the endoplasmic reticulum to provide new virions. This is Capsid protein from Hepatitis B virus genotype D subtype ayw (isolate Italy/CI/1992) (HBV-D).